A 398-amino-acid polypeptide reads, in one-letter code: Serpin-Z2A (398 aa).

The interval 343-367 (GTEAAAATIAKAVLLSASPPSDMDF) is RCL.

Belongs to the serpin family.

In terms of biological role, inhibits chymotrypsin and cathepsin G in vitro. The protein is Serpin-Z2A of Triticum aestivum (Wheat).